Reading from the N-terminus, the 601-residue chain is MWRVARSAASTFRRTRRLSTAISAPCIVHKRGADILHDPWFNKDTGFPMTERDRLGLRGLLPPRVISFEQQYDRFMESFRSLEKNTEGQPDSVVSLAKWRILNRLHDRNETLYYRVLIDNIKDFAPIIYTPTVGLVCQNYSGLFRRPRGMYFSAKDKGEMMSMIFNWPSTQVDMIVLTDGSRILGLGDLGVQGIGIPIGKLDMYVAAAGINPQRVLPVMLDVGTNNQKLLEDPLYLGLRQPRLEGEEYLSIVDEFVEAVHARWPKAVVQFEDFQAKWAFETLDRYRKKFCMFNDDIQGTAGVALAGLLGTVRAQGRPLTDFANQKIVVVGAGSAGLGVLKMALQAVSRMTGPSADPHFFLLDKNGLITKDRKDIDPAALPFAKAHHEIEGLGLQEGAGLAEVVKKVKPHVLLGLSGVGGIFHEEVLRAMKESDSVRPAIFAMSNPTNNAECCPVDAFKLAGEDIVFASGSPFANVDLGNGKIGHVNQANNMYLFPGIGLGALLSGARNISDTMLEAAAECLASYMSDDEINRGILYPSIDDIRDITAEVGAAVLRAAVAEDLAEGHGDVGVKELQHMSKEETIEHVRQNMWYPVYGPLVHE.

The transit peptide at M1–L18 directs the protein to the mitochondrion. Y129 serves as the catalytic Proton donor. Position 182 (R182) interacts with NAD(+). Residue K200 is the Proton acceptor of the active site. A divalent metal cation contacts are provided by E271, D272, and D295. Residues D295 and N444 each coordinate NAD(+).

The protein belongs to the malic enzymes family. Heterodimer of two related subunits. Mg(2+) serves as cofactor. It depends on Mn(2+) as a cofactor.

The protein resides in the mitochondrion matrix. It carries out the reaction (S)-malate + NAD(+) = pyruvate + CO2 + NADH. This Solanum tuberosum (Potato) protein is NAD-dependent malic enzyme 59 kDa isoform, mitochondrial.